Reading from the N-terminus, the 327-residue chain is tRNA dimethylallyltransferase (327 aa).

18 to 25 contributes to the ATP binding site; the sequence is GPTASGKT. Residue 20-25 participates in substrate binding; that stretch reads TASGKT. 3 interaction with substrate tRNA regions span residues 43–46, 167–171, and 251–256; these read DSAL, QRVQR, and RCVGYR.

This sequence belongs to the IPP transferase family. Monomer. Mg(2+) is required as a cofactor.

It catalyses the reaction adenosine(37) in tRNA + dimethylallyl diphosphate = N(6)-dimethylallyladenosine(37) in tRNA + diphosphate. Catalyzes the transfer of a dimethylallyl group onto the adenine at position 37 in tRNAs that read codons beginning with uridine, leading to the formation of N6-(dimethylallyl)adenosine (i(6)A). This is tRNA dimethylallyltransferase from Methylibium petroleiphilum (strain ATCC BAA-1232 / LMG 22953 / PM1).